A 180-amino-acid chain; its full sequence is Der GTPase-activating protein YihI (180 aa).

Disordered regions lie at residues 1–87 (MSRK…MTKQ) and 142–180 (GLLE…DYKG). The segment covering 23 to 32 (NRTESDVEGR) has biased composition (basic and acidic residues). Residues 33–43 (LRKRAKKRKGL) are compositionally biased toward basic residues. Residues 51–68 (EVNEQKKQSSEQNRDPRL) show a composition bias toward basic and acidic residues. Residues 165–180 (DLLADFDDINFDDYKG) show a composition bias toward acidic residues.

Belongs to the YihI family. As to quaternary structure, interacts with Der.

In terms of biological role, a GTPase-activating protein (GAP) that modifies Der/EngA GTPase function. May play a role in ribosome biogenesis. The polypeptide is Der GTPase-activating protein YihI (Vibrio parahaemolyticus serotype O3:K6 (strain RIMD 2210633)).